Consider the following 124-residue polypeptide: Small ribosomal subunit protein uS12 (124 aa).

Position 89 is a 3-methylthioaspartic acid (Asp-89). The tract at residues Asp-103–Lys-124 is disordered. A compositionally biased stretch (basic residues) spans Asn-111 to Lys-124.

The protein belongs to the universal ribosomal protein uS12 family. As to quaternary structure, part of the 30S ribosomal subunit. Contacts proteins S8 and S17. May interact with IF1 in the 30S initiation complex.

In terms of biological role, with S4 and S5 plays an important role in translational accuracy. Interacts with and stabilizes bases of the 16S rRNA that are involved in tRNA selection in the A site and with the mRNA backbone. Located at the interface of the 30S and 50S subunits, it traverses the body of the 30S subunit contacting proteins on the other side and probably holding the rRNA structure together. The combined cluster of proteins S8, S12 and S17 appears to hold together the shoulder and platform of the 30S subunit. The protein is Small ribosomal subunit protein uS12 of Desulforudis audaxviator (strain MP104C).